Reading from the N-terminus, the 487-residue chain is MKALDELTFDNRFARLGDAFSTHVLPEPLDNPRLVAASPGAMALLDLDPAVAETPVFAELFGGHKLWAEAEPRAMVYSGHQFGSYNPQLGDGRGLLLGEVYNQAGEHWDLHLKGAGQTPYSRMGDGRAVLRSSIREFLASEALHALGIPSSRALCVIGSDTPVWREKQERGAMVLRLAPSHVRFGHFEYFYYTKKPEQQKQLGEHVLALHFPECQELPEPYLAMFREIVERNAELIAKWQAYGFCHGVMNTDNMSILGITFDFGPFAFLDDFDAHFICNHSDDQGRYSFSNQVPIGQWNLSALAQALTPFISVEALRESLGLFLPLYQAHYLDLMRRRLGFTQAEDDDQKLVERLLQLMQNSGVDYSLFFRRLGEHAPEQALARLRDDFVDRNGFDAWAELYRERVARDPIQGQDLRRARMHAVNPLYILRNYLAQKAIDAAEAGDYSEVRRLHQVLSRPFEEQPGMDSYAERPPEWGKHLEISCSS.

Residues Gly90, Gly92, Arg93, Lys113, Asp125, Gly126, Arg176, and Arg183 each coordinate ATP. Catalysis depends on Asp252, which acts as the Proton acceptor. Residues Asn253 and Asp262 each contribute to the Mg(2+) site. Asp262 is an ATP binding site.

The protein belongs to the SELO family. Mg(2+) is required as a cofactor. It depends on Mn(2+) as a cofactor.

The catalysed reaction is L-seryl-[protein] + ATP = 3-O-(5'-adenylyl)-L-seryl-[protein] + diphosphate. It catalyses the reaction L-threonyl-[protein] + ATP = 3-O-(5'-adenylyl)-L-threonyl-[protein] + diphosphate. It carries out the reaction L-tyrosyl-[protein] + ATP = O-(5'-adenylyl)-L-tyrosyl-[protein] + diphosphate. The enzyme catalyses L-histidyl-[protein] + UTP = N(tele)-(5'-uridylyl)-L-histidyl-[protein] + diphosphate. The catalysed reaction is L-seryl-[protein] + UTP = O-(5'-uridylyl)-L-seryl-[protein] + diphosphate. It catalyses the reaction L-tyrosyl-[protein] + UTP = O-(5'-uridylyl)-L-tyrosyl-[protein] + diphosphate. Its function is as follows. Nucleotidyltransferase involved in the post-translational modification of proteins. It can catalyze the addition of adenosine monophosphate (AMP) or uridine monophosphate (UMP) to a protein, resulting in modifications known as AMPylation and UMPylation. In Pseudomonas fluorescens (strain ATCC BAA-477 / NRRL B-23932 / Pf-5), this protein is Protein nucleotidyltransferase YdiU.